The following is a 131-amino-acid chain: Profilin-1 (131 aa).

The protein belongs to the profilin family. As to quaternary structure, occurs in many kinds of cells as a complex with monomeric actin in a 1:1 ratio.

It localises to the cytoplasm. The protein localises to the cytoskeleton. Its function is as follows. Binds to actin and affects the structure of the cytoskeleton. At high concentrations, profilin prevents the polymerization of actin, whereas it enhances it at low concentrations. By binding to PIP2, it inhibits the formation of IP3 and DG. This chain is Profilin-1 (PRO1), found in Ricinus communis (Castor bean).